Here is a 246-residue protein sequence, read N- to C-terminus: Putative outer membrane protein YiaT (246 aa).

A signal peptide spans 1 to 21; it reads MLINRNIVALFALPFMASATA.

This sequence belongs to the MipA/OmpV family.

Its subcellular location is the cell outer membrane. This chain is Putative outer membrane protein YiaT (yiaT), found in Escherichia coli (strain K12).